The sequence spans 157 residues: SsrA-binding protein (157 aa).

Residues 132–157 (VHDKRQAQKDKDWAREKDRLFKKAYK) form a disordered region. Residues 135 to 157 (KRQAQKDKDWAREKDRLFKKAYK) are compositionally biased toward basic and acidic residues.

The protein belongs to the SmpB family.

Its subcellular location is the cytoplasm. Its function is as follows. Required for rescue of stalled ribosomes mediated by trans-translation. Binds to transfer-messenger RNA (tmRNA), required for stable association of tmRNA with ribosomes. tmRNA and SmpB together mimic tRNA shape, replacing the anticodon stem-loop with SmpB. tmRNA is encoded by the ssrA gene; the 2 termini fold to resemble tRNA(Ala) and it encodes a 'tag peptide', a short internal open reading frame. During trans-translation Ala-aminoacylated tmRNA acts like a tRNA, entering the A-site of stalled ribosomes, displacing the stalled mRNA. The ribosome then switches to translate the ORF on the tmRNA; the nascent peptide is terminated with the 'tag peptide' encoded by the tmRNA and targeted for degradation. The ribosome is freed to recommence translation, which seems to be the essential function of trans-translation. The polypeptide is SsrA-binding protein (Francisella tularensis subsp. tularensis (strain FSC 198)).